The primary structure comprises 1801 residues: Focadhesin (1801 aa).

The residue at position 819 (Lys819) is an N6-acetyllysine.

In terms of assembly, interacts with VCL. Ubiquitous. High expression in brain followed by testis, muscle, pancreas, heart, ovary, small intestine, placenta, prostate, thymus, kidney, colon, liver, lung, spleen and leukocytes. Expression is reduced in most glioblastomas and all glioblastoma cell lines.

It localises to the cell junction. It is found in the focal adhesion. The protein resides in the cytoplasm. The protein localises to the cytosol. Its function is as follows. Required for the maintenance of SKIC2 and SKIC3 proteostatic levels in the liver. May be involved in the regulation of RNA degradation by the exosome complex. Potential tumor suppressor in gliomas. This is Focadhesin from Homo sapiens (Human).